We begin with the raw amino-acid sequence, 206 residues long: Large ribosomal subunit protein mL62 (206 aa).

Residues 1–29 constitute a mitochondrion transit peptide; sequence MAATRCLRWGLSRAGVWLLPPPARCPRRA. The residue at position 90 (Gln-90) is an N5-methylglutamine.

It belongs to the prokaryotic/mitochondrial release factor family. Mitochondrion-specific ribosomal protein mL62 subfamily. In terms of assembly, component of the mitochondrial large ribosomal subunit (mt-LSU). Mature mammalian 55S mitochondrial ribosomes consist of a small (28S) and a large (39S) subunit. The 28S small subunit contains a 12S ribosomal RNA (12S mt-rRNA) and 30 different proteins. The 39S large subunit contains a 16S rRNA (16S mt-rRNA), a copy of mitochondrial valine transfer RNA (mt-tRNA(Val)), which plays an integral structural role, and 52 different proteins. In terms of processing, methylation of glutamine in the GGQ triplet by HEMK1. Down-regulated during the in vitro differentiation of HT29-D4 colon carcinoma cells.

Its subcellular location is the mitochondrion. The enzyme catalyses an N-acyl-L-alpha-aminoacyl-tRNA + H2O = an N-acyl-L-amino acid + a tRNA + H(+). Functionally, essential peptidyl-tRNA hydrolase component of the mitochondrial large ribosomal subunit. Acts as a codon-independent translation release factor that has lost all stop codon specificity and directs the termination of translation in mitochondrion, possibly in case of abortive elongation. Involved in the hydrolysis of peptidyl-tRNAs that have been prematurely terminated and thus in the recycling of stalled mitochondrial ribosomes. In Homo sapiens (Human), this protein is Large ribosomal subunit protein mL62.